Here is a 290-residue protein sequence, read N- to C-terminus: UPF0750 membrane protein YpjC (290 aa).

6 helical membrane passes run 9 to 29 (NIFF…HFNM), 47 to 67 (ALFH…IFFI), 75 to 95 (TMFV…SIFQ), 106 to 126 (DLAL…GIIF), 146 to 166 (FGIP…ILSL), and 179 to 199 (LVAV…GYAA).

The protein belongs to the UPF0750 family.

The protein localises to the cell membrane. The polypeptide is UPF0750 membrane protein YpjC (ypjC) (Bacillus subtilis (strain 168)).